The sequence spans 186 residues: Putative 5'(3')-deoxyribonucleotidase (186 aa).

The active-site Nucleophile is the Asp6. Mg(2+) contacts are provided by Asp6, Asp8, and Asp137. Asp8 (proton donor) is an active-site residue.

The protein belongs to the 5'(3')-deoxyribonucleotidase family. The cofactor is Mg(2+).

Dephosphorylates the 5' and 2'(3')-phosphates of deoxyribonucleotides. This is Putative 5'(3')-deoxyribonucleotidase from Bordetella bronchiseptica (strain ATCC BAA-588 / NCTC 13252 / RB50) (Alcaligenes bronchisepticus).